The following is a 599-amino-acid chain: MKKILPIIWLINLVSGSLSLEKKAPDLLGKVCAFGDFNADRNTDILVFANGTLTINYQETKLLDVLEASKFTPGTSFAISKPSLNADFVECSVGDFNGDSRLDVLVSIRDKDTEIYNHTLWTSEIEDEKEIFRPFHVAMLQQHAMAIDVSDDGWTDVLGFYPNGSMFCTGFNKEGKYNLLVNGCKHEFVAFPEKLNIYPGMPHLFVDLNSDLIADIVFMTKESDGSLFMSVWQKTKISWQFRDWVPKLTPAQYPFVGAPVVMDVDSDGELDILVPICREDECSHITQMASWSKTKLWGLVACDMQDYTVIKEPFSRVIFRVGEFSLDSFPDMVVIAQATRANTRPVIKVMDNAECTKCEKNGTRRFEIRAQENIQPKNMSLGVIKMGTFFDLLEDGSLDLLVEYEYGGQTRFGFIYCPDKGDTTFLKVQVFTGVCSDRCNPKSNEIGSSISMTGACASFSMTDGWGGSTQSVACQVPASSNRALYLPFLLYGLGRSPNFVDELNIAIPKYADRKEDWKHSLKQIVPNSRIIVLPPSDQYPHWTSRLYVTPSALIVQSLAVIALVCCMLLMVVVFLHYREKKEDRYERQQQSHRFHFDAM.

The signal sequence occupies residues 1 to 19; sequence MKKILPIIWLINLVSGSLS. Over 20–553 the chain is Extracellular; it reads LEKKAPDLLG…SRLYVTPSAL (534 aa). N-linked (GlcNAc...) asparagine glycosylation is found at N50, N117, N163, N361, and N378. The helical transmembrane segment at 554 to 574 threads the bilayer; it reads IVQSLAVIALVCCMLLMVVVF. Over 575–599 the chain is Cytoplasmic; the sequence is LHYREKKEDRYERQQQSHRFHFDAM.

Belongs to the TIP family. In terms of tissue distribution, expressed in all somatic gonadal cells including distal tip cells, anchor cell, uterine precursor cells and spermatheca precursor cells of the hermaphrodite. Also expressed in the pharynx, pharyngeal-intestinal valve, intestine, excretory cell and canal, seam cells, a subset of hypodermal cells, vulval precursor cells of the hermaphrodite and hook precursor cells in the male.

It is found in the apical cell membrane. Its subcellular location is the lateral cell membrane. In terms of biological role, probable cell adhesion protein involved in gonadal cell migration. The polypeptide is Protein linkin (Caenorhabditis elegans).